Consider the following 793-residue polypeptide: PC3-like endoprotease variant A (793 aa).

An N-terminal signal peptide occupies residues 1–29 (MNYRGIYRRRYVFVLLLLVAVVNISYGWT). The propeptide occupies 30 to 152 (VLKNKDYKRR…QQKILERVKR (123 aa)). N-linked (GlcNAc...) asparagine glycans are attached at residues asparagine 62 and asparagine 190. A Peptidase S8 domain is found at 164–486 (MWYLLNTGQA…FGRLDANAMV (323 aa)). Active-site charge relay system residues include aspartate 202 and histidine 242. 2 disulfide bridges follow: cysteine 259–cysteine 411 and cysteine 351–cysteine 381. Serine 419 acts as the Charge relay system in catalysis. Residues 495-638 (LPAQRKCTAA…EERVIDTQTK (144 aa)) enclose the P/Homo B domain. Cysteine 501 and cysteine 527 are oxidised to a cystine.

The protein belongs to the peptidase S8 family. Furin subfamily. Predominantly in the body column.

Its function is as follows. Probably involved in the processing of hormone and other protein precursors at sites comprised of pairs of basic amino acid residues. This chain is PC3-like endoprotease variant A, found in Hydra vulgaris (Hydra).